The chain runs to 459 residues: Mycothione reductase (459 aa).

31–39 (EQGTFGGTC) is a binding site for FAD. Cys-39 and Cys-44 form a disulfide bridge. The active-site Proton acceptor is His-444.

This sequence belongs to the class-I pyridine nucleotide-disulfide oxidoreductase family. In terms of assembly, homodimer. FAD serves as cofactor.

The catalysed reaction is 2 mycothiol + NADP(+) = mycothione + NADPH + H(+). It carries out the reaction 2 mycothiol + NAD(+) = mycothione + NADH + H(+). Functionally, catalyzes the NAD(P)H-dependent reduction of mycothione (the oxidized disulfide form of mycothiol) to mycothiol. This is Mycothione reductase (mtr) from Mycobacterium tuberculosis (strain CDC 1551 / Oshkosh).